A 491-amino-acid polypeptide reads, in one-letter code: Conidiogenone synthase PchP450 (491 aa).

The helical transmembrane segment at 2-22 (LLLWFGFFSFVCGLVIYRLQF) threads the bilayer. Cys430 lines the heme pocket.

Belongs to the cytochrome P450 family. Heme serves as cofactor.

The protein localises to the membrane. It participates in secondary metabolite biosynthesis; terpenoid biosynthesis. In terms of biological role, cytochrome P450 monooxygenase; part of the gene cluster that mediates the biosynthesis of conidiogenone, a diterpene known to induce the conidiation. The bifunctional terpene synthase PrDS converts isopentenyl diphosphate (IPP) and dimethylallyl diphosphate (DMAPP) into deoxyconidiogenol. The C-terminal prenyltransferase (PT) domain of PrDS catalyzes formation of GGPP, whereas the N-terminal terpene cyclase (TC) domain catalyzes the cyclization of GGPP into deoxyconidiogenol. The cytochrome P450 monooxygenase PrP450 then catalyzes two rounds of oxidation to furnish conidiogenone. This Penicillium rubens (strain ATCC 28089 / DSM 1075 / NRRL 1951 / Wisconsin 54-1255) (Penicillium chrysogenum) protein is Conidiogenone synthase PchP450.